The primary structure comprises 238 residues: Ciliary microtubule associated protein 1B (238 aa).

The stretch at 182-207 (PGPCAYHVVNPMIYKTRAPQFTMLGR) is one STPGR repeat. The segment at 206–238 (GRTLPPRENTKKPGPASYSVDKVVWSRGSRGRG) is disordered.

The protein belongs to the CIMAP family.

The protein resides in the cell projection. The protein localises to the cilium. It is found in the flagellum. The chain is Ciliary microtubule associated protein 1B (Cimap1b) from Mus musculus (Mouse).